A 201-amino-acid polypeptide reads, in one-letter code: MKTDDKDREGGDSHGAIGAKLMEYALKVRKVFVTGGVDEKMAKDVVQQLHILASISDDPIYMFVNSPGGHVESGDMIFDAIRFITPKVIMIGSGSVASAGALIYAAADKENRYSLPNTRFLLHQPSGGIQGPASNIEIYRREIVRMKERLDRIFAEATGQTPEKISADTERDFWLNAEEAVQYGLVNKIIVSEREITLPGQ.

Catalysis depends on serine 98, which acts as the Nucleophile. Histidine 123 is a catalytic residue.

Belongs to the peptidase S14 family. As to quaternary structure, fourteen ClpP subunits assemble into 2 heptameric rings which stack back to back to give a disk-like structure with a central cavity, resembling the structure of eukaryotic proteasomes.

It localises to the cytoplasm. The enzyme catalyses Hydrolysis of proteins to small peptides in the presence of ATP and magnesium. alpha-casein is the usual test substrate. In the absence of ATP, only oligopeptides shorter than five residues are hydrolyzed (such as succinyl-Leu-Tyr-|-NHMec, and Leu-Tyr-Leu-|-Tyr-Trp, in which cleavage of the -Tyr-|-Leu- and -Tyr-|-Trp bonds also occurs).. Cleaves peptides in various proteins in a process that requires ATP hydrolysis. Has a chymotrypsin-like activity. Plays a major role in the degradation of misfolded proteins. The sequence is that of ATP-dependent Clp protease proteolytic subunit 2 from Pseudomonas aeruginosa (strain ATCC 15692 / DSM 22644 / CIP 104116 / JCM 14847 / LMG 12228 / 1C / PRS 101 / PAO1).